Reading from the N-terminus, the 424-residue chain is Serine--tRNA ligase (424 aa).

Thr-233–Glu-235 serves as a coordination point for L-serine. ATP is bound by residues Arg-264–Glu-266 and Val-280. Residue Glu-287 coordinates L-serine. ATP is bound at residue Glu-351 to Ser-354. Ser-386 contacts L-serine.

Belongs to the class-II aminoacyl-tRNA synthetase family. Type-1 seryl-tRNA synthetase subfamily. As to quaternary structure, homodimer. The tRNA molecule binds across the dimer.

It localises to the cytoplasm. The catalysed reaction is tRNA(Ser) + L-serine + ATP = L-seryl-tRNA(Ser) + AMP + diphosphate + H(+). It catalyses the reaction tRNA(Sec) + L-serine + ATP = L-seryl-tRNA(Sec) + AMP + diphosphate + H(+). Its pathway is aminoacyl-tRNA biosynthesis; selenocysteinyl-tRNA(Sec) biosynthesis; L-seryl-tRNA(Sec) from L-serine and tRNA(Sec): step 1/1. Catalyzes the attachment of serine to tRNA(Ser). Is also able to aminoacylate tRNA(Sec) with serine, to form the misacylated tRNA L-seryl-tRNA(Sec), which will be further converted into selenocysteinyl-tRNA(Sec). The protein is Serine--tRNA ligase of Kosmotoga olearia (strain ATCC BAA-1733 / DSM 21960 / TBF 19.5.1).